A 369-amino-acid polypeptide reads, in one-letter code: Peptide chain release factor 1 (369 aa).

Position 234 is an N5-methylglutamine (glutamine 234).

Belongs to the prokaryotic/mitochondrial release factor family. In terms of processing, methylated by PrmC. Methylation increases the termination efficiency of RF1.

Its subcellular location is the cytoplasm. Its function is as follows. Peptide chain release factor 1 directs the termination of translation in response to the peptide chain termination codons UAG and UAA. This chain is Peptide chain release factor 1, found in Kocuria rhizophila (strain ATCC 9341 / DSM 348 / NBRC 103217 / DC2201).